The following is a 175-amino-acid chain: Cytochrome c-type biogenesis protein CcmE (175 aa).

Over 1 to 8 the chain is Cytoplasmic; sequence MNAVRRKK. Residues 9 to 29 form a helical; Signal-anchor for type II membrane protein membrane-spanning segment; it reads LIWVAATLAGAIIAVLLVIYA. Topologically, residues 30–175 are periplasmic; sequence IGQQTDYYFD…GNHTTSTLQE (146 aa). Heme-binding residues include His-124 and Tyr-128. The disordered stretch occupies residues 142-175; that stretch reads AAKGVTPTSEQFSPAIPVKQTAGEGNHTTSTLQE.

Belongs to the CcmE/CycJ family.

It localises to the cell inner membrane. Its function is as follows. Heme chaperone required for the biogenesis of c-type cytochromes. Transiently binds heme delivered by CcmC and transfers the heme to apo-cytochromes in a process facilitated by CcmF and CcmH. The sequence is that of Cytochrome c-type biogenesis protein CcmE from Psychrobacter sp. (strain PRwf-1).